Reading from the N-terminus, the 452-residue chain is Lichenan permease IIC component (452 aa).

The 414-residue stretch at 8–421 folds into the PTS EIIC type-3 domain; the sequence is LEEKVMPIAG…AVSFVVYYPF (414 aa). 10 helical membrane-spanning segments follow: residues 31-51, 72-92, 104-124, 138-158, 187-207, 218-238, 246-266, 291-311, 351-373, and 402-422; these read GIIL…IGNL, LAYP…FGIA, LSAG…QVPF, GIPL…IAMV, FVAL…RLIV, IVSV…GGSL, LLWA…APIW, FFDI…VVTM, LLLP…MSTG, and SGAV…YPFF.

The protein resides in the cell membrane. In terms of biological role, the phosphoenolpyruvate-dependent sugar phosphotransferase system (PTS), a major carbohydrate active -transport system, catalyzes the phosphorylation of incoming sugar substrates concomitant with their translocation across the cell membrane. This system is involved in lichenan transport. In Bacillus subtilis (strain 168), this protein is Lichenan permease IIC component (licC).